The following is a 262-amino-acid chain: Integral membrane protein 2B (262 aa).

At 1 to 49 the chain is on the cytoplasmic side; that stretch reads MVKVSFNSALAHKEAANKEEENSQVLILPPDAKEPEDVVVPAGHKRAWC. Residues 50–70 traverse the membrane as a helical; Signal-anchor for type II membrane protein segment; that stretch reads WCMCFGLAFMLAGVILGGAYL. Over 71-262 the chain is Lumenal; sequence YKYFAFQQGG…FAMETLICEQ (192 aa). The region spanning 132-226 is the BRICHOS domain; the sequence is FADSDPADIV…LCRGKETYKL (95 aa). 2 cysteine pairs are disulfide-bonded: cysteine 159–cysteine 218 and cysteine 243–cysteine 260. N-linked (GlcNAc...) asparagine glycosylation occurs at asparagine 165.

Belongs to the ITM2 family. Homodimer; disulfide-linked. Expressed in areas of chondro-osteogenic transition and widely in the nervous system.

The protein resides in the golgi apparatus membrane. It localises to the cell membrane. Its subcellular location is the endosome membrane. Functionally, plays a role in the induction of neurite outgrowth. In Gallus gallus (Chicken), this protein is Integral membrane protein 2B (ITM2B).